Consider the following 138-residue polypeptide: uncharacterized protein (138 aa).

This is an uncharacterized protein from Homo sapiens (Human).